The primary structure comprises 711 residues: Hydroperoxide isomerase ALOXE3 (711 aa).

A PLAT domain is found at 2-119; sequence AVYRLCVTTG…TVELRPGTAR (118 aa). A Lipoxygenase domain is found at 120-711; it reads TICQDSLPLL…PPLIENSVSI (592 aa). Positions 408, 413, 588, 592, and 711 each coordinate Fe cation.

This sequence belongs to the lipoxygenase family. Fe cation is required as a cofactor. As to expression, predominantly expressed in skin.

It localises to the cytoplasm. The catalysed reaction is a hydroperoxyeicosatetraenoate = a hydroxy-epoxy-eicosatetraenoate. The enzyme catalyses (12R)-hydroperoxy-(5Z,8Z,10E,14Z)-eicosatetraenoate = (8R)-hydroxy-(11R,12R)-epoxy-(5Z,9E,14Z)-eicosatrienoate. It catalyses the reaction (12S)-hydroperoxy-(5Z,8Z,10E,14Z)-eicosatetraenoate = (8R)-hydroxy-(11S,12S)-epoxy-(5Z,9E,14Z)-eicosatrienoate. It carries out the reaction (12S)-hydroperoxy-(5Z,8Z,10E,14Z)-eicosatetraenoate = (10R)-hydroxy-(11S,12S)-epoxy-(5Z,8Z,14Z)-eicosatrienoate. The catalysed reaction is (15S)-hydroperoxy-(5Z,8Z,11Z,13E)-eicosatetraenoate = (13R)-hydroxy-(14S,15S)-epoxy-(5Z,8Z,11Z)-eicosatrienoate. The enzyme catalyses (5S)-hydroperoxy-(6E,8Z,11Z,14Z)-eicosatetraenoate = 7R-hydroxy-5S,6S-epoxy-(8Z,11Z,14Z)-eicosatrienoate. It catalyses the reaction (13S)-hydroperoxy-(9Z,11E)-octadecadienoate = 11-hydroxy-(12S,13S)-epoxy-(9Z)-octadecenoate. It carries out the reaction N-[omega-(9R)-hydroperoxy-(10E,12Z)-octadecadienoyloxy]acyl-beta-D-glucosyl-(1&lt;-&gt;1)-octadecasphing-4E-enine = a N-[omega-(9R,10R)-epoxy-(13R)-hydroxy-(11E)-octadecenoyloxy]acyl-beta-D-glucosyl-(1&lt;-&gt;1)-sphing-4E-enine. The catalysed reaction is a N-[omega-(9R)-hydroperoxy-(10E,12Z)-octadecadienoyloxy]-acylsphin-4E-enine = a N-[omega-(9R,10R)-epoxy-(13R)-hydroxy-(11E)-octadecenoyloxy]-acylsphing-4E-enine. The enzyme catalyses a hydroperoxyeicosatetraenoate = an oxoeicosatetraenoate + H2O. It catalyses the reaction (12R)-hydroperoxy-(5Z,8Z,10E,14Z)-eicosatetraenoate = 12-oxo-(5Z,8Z,10E,14Z)-eicosatetraenoate + H2O. It carries out the reaction (12S)-hydroperoxy-(5Z,8Z,10E,14Z)-eicosatetraenoate = 12-oxo-(5Z,8Z,10E,14Z)-eicosatetraenoate + H2O. The catalysed reaction is (15S)-hydroperoxy-(5Z,8Z,11Z,13E)-eicosatetraenoate = 15-oxo-(5Z,8Z,11Z,13E)-eicosatetraenoate + H2O. The enzyme catalyses (13S)-hydroperoxy-(9Z,11E)-octadecadienoate = 13-oxo-(9Z,11E)-octadecadienoate + H2O. It catalyses the reaction (8S)-hydroperoxy-(5Z,9E,11Z,14Z)-eicosatetraenoate = (10R)-hydroxy-(8S,9S)-epoxy-(5Z,11Z,14Z)-eicosatrienoate. It carries out the reaction (8R)-hydroperoxy-(5Z,9E,11Z,14Z)-eicosatetraenoate = 8-oxo-(5Z,9E,11Z,14Z)-eicosatetraenoate + H2O. The catalysed reaction is (8S)-hydroperoxy-(5Z,9E,11Z,14Z)-eicosatetraenoate = 8-oxo-(5Z,9E,11Z,14Z)-eicosatetraenoate + H2O. The protein operates within lipid metabolism; hydroperoxy eicosatetraenoic acid biosynthesis. It functions in the pathway lipid metabolism; sphingolipid metabolism. Its activity is regulated as follows. Lipoxygenase activity is activated by 13(S)-HPODE leading to an active free ferric enzyme. The lipoxygenase and hydroperoxide isomerase activities are in competition and are reciprocally regulated by oxygen. The oxygen reacts with an epoxyallylic radical intermediate leading to an epoxyallylic peroxyl radical, which, due to its limited reactivity within the enzyme active site, it dissociates and leaves the enzyme in the activated free ferric state. In terms of biological role, non-heme iron-containing lipoxygenase which is atypical in that it displays a prominent hydroperoxide isomerase activity and a reduced lipoxygenases activity. The hydroperoxide isomerase activity catalyzes the isomerization of hydroperoxides, derived from arachidonic and linoleic acid by ALOX12B, into hepoxilin-type epoxyalcohols and ketones. In presence of oxygen, oxygenates polyunsaturated fatty acids, including arachidonic acid, to produce fatty acid hydroperoxides. In the skin, acts downstream of ALOX12B on the linoleate moiety of esterified omega-hydroxyacyl-sphingosine (EOS) ceramides to produce an epoxy-ketone derivative, a crucial step in the conjugation of omega-hydroxyceramide to membrane proteins. Therefore plays a crucial role in the synthesis of corneocytes lipid envelope and the establishment of the skin barrier to water loss. In parallel, it may have a signaling function in barrier formation through the production of hepoxilins metabolites. Also plays a role in adipocyte differentiation through hepoxilin A3 and hepoxilin B3 production which in turn activate PPARG. Through the production of hepoxilins in the spinal cord, it may regulate inflammatory tactile allodynia. The sequence is that of Hydroperoxide isomerase ALOXE3 from Homo sapiens (Human).